The primary structure comprises 380 residues: Apelin receptor (380 aa).

The Extracellular segment spans residues 1 to 30 (MEEGGDFDNYYGADNQSECEYTDWKSSGAL). An N-linked (GlcNAc...) asparagine glycan is attached at Asn-15. Cystine bridges form between Cys-19–Cys-281 and Cys-102–Cys-181. The chain crosses the membrane as a helical span at residues 31-54 (IPAIYMLVFLLGTTGNGLVLWTVF). Over 55–64 (RSSREKRRSA) the chain is Cytoplasmic. Residues 65-86 (DIFIASLAVADLTFVVTLPLWA) form a helical membrane-spanning segment. At 87-99 (TYTYRDYDWPFGT) the chain is on the extracellular side. A helical membrane pass occupies residues 100–125 (FFCKLSSYLIFVNMYASVFCLTGLSF). Topologically, residues 126-146 (DRYLAIVRPVANARLRLRVSG) are cytoplasmic. Residues 147–164 (AVATAVLWVLAALLAMPV) form a helical membrane-spanning segment. Topologically, residues 165-198 (MVLRTTGDLENTTKVQCYMDYSMVATVSSEWAWE) are extracellular. Asn-175 carries N-linked (GlcNAc...) asparagine glycosylation. A helical transmembrane segment spans residues 199 to 223 (VGLGVSSTTVGFVVPFTIMLTCYFF). Topologically, residues 224 to 246 (IAQTIAGHFRKERIEGLRKRRRL) are cytoplasmic. The helical transmembrane segment at 247 to 270 (LSIIVVLVVTFALCWMPYHLVKTL) threads the bilayer. Topologically, residues 271 to 289 (YMLGSLLHWPCDFDLFLMN) are extracellular. A helical membrane pass occupies residues 290–312 (IFPYCTCISYVNSCLNPFLYAFF). Over 313–380 (DPRFRQACTS…PYSQETLVVD (68 aa)) the chain is Cytoplasmic. A compositionally biased stretch (low complexity) spans 342–351 (KSASYSSGHS). The tract at residues 342–380 (KSASYSSGHSQGPGPNMGKGGEQMHEKSIPYSQETLVVD) is disordered. A compositionally biased stretch (polar residues) spans 371-380 (PYSQETLVVD).

The protein belongs to the G-protein coupled receptor 1 family. Homodimer; dimerization inhibits APLNR-mediated G protein and beta-arrestin signaling pathways compared to monomeric APLNR. Expressed in heart, brain, kidney, stomach, spleen, thymus, lung, ovary, small intestine and colon, adipose tissues and pancreas. Expressed in glial cells, astrocytes and neuronal subpopulations. Expressed in embryonic (ESCs) and induced (iPSCs) pluripotent stem cells.

It is found in the cell membrane. G protein-coupled receptor for peptide hormones apelin (APLN) and apelin receptor early endogenous ligand (APELA/ELA), that plays a role in the regulation of normal cardiovascular function and fluid homeostasis. When acting as apelin receptor, activates both G(i) protein pathway that inhibits adenylate cyclase activity, and the beta-arrestin pathway that promotes internalization of the receptor. APLNR/APJ also functions as mechanoreceptor that is activated by pathological stimuli in a G-protein-independent fashion to induce beta-arrestin signaling, hence eliciting cardiac hypertrophy. However, the presence of apelin ligand blunts cardiac hypertrophic induction from APLNR/APJ on response to pathological stimuli. Plays a key role in early development such as gastrulation, blood vessels formation and heart morphogenesis by acting as a APELA receptor. May promote angioblast migration toward the embryonic midline, i.e. the position of the future vessel formation, during vasculogenesis. Promotes sinus venosus (SV)-derived endothelial cells migration into the developing heart to promote coronary blood vessel development. Also plays a role in various processes in adults such as regulation of blood vessel formation, blood pressure, heart contractility and heart failure. In terms of biological role, (Microbial infection) Alternative coreceptor with CD4 for HIV-1 infection; may be involved in the development of AIDS dementia. This chain is Apelin receptor, found in Homo sapiens (Human).